The following is a 516-amino-acid chain: Lipid II flippase MurJ (516 aa).

Helical transmembrane passes span W93–V113, I133–T153, L159–A179, A188–L208, V233–I253, L275–L295, V317–T337, L358–F378, I390–I409, F448–I468, and I483–V503.

This sequence belongs to the MurJ/MviN family.

The protein localises to the cell inner membrane. It functions in the pathway cell wall biogenesis; peptidoglycan biosynthesis. Involved in peptidoglycan biosynthesis. Transports lipid-linked peptidoglycan precursors from the inner to the outer leaflet of the cytoplasmic membrane. The chain is Lipid II flippase MurJ from Burkholderia cenocepacia (strain ATCC BAA-245 / DSM 16553 / LMG 16656 / NCTC 13227 / J2315 / CF5610) (Burkholderia cepacia (strain J2315)).